The primary structure comprises 106 residues: Ribosomal protein eL42-like (106 aa).

The disordered stretch occupies residues 26–53; the sequence is YKKGKDSLYAQGRRRYDRKQSGYGGQTK. Residue lysine 53 is modified to N6-methyllysine.

It belongs to the eukaryotic ribosomal protein eL42 family. Ubiquitously expressed.

The protein localises to the cytoplasm. In Homo sapiens (Human), this protein is Ribosomal protein eL42-like (RPL36AL).